The sequence spans 272 residues: GEM-like protein 5 (272 aa).

Residues 1-42 (MTGSQEDQPKIIIDQEQPKTLETEHQPEPSSSSPDQKKWGTH) form a disordered region. The span at 16-27 (EQPKTLETEHQP) shows a compositional bias: basic and acidic residues. The 79-residue stretch at 143-221 (SLFRQIFGTE…ANVATVNPVV (79 aa)) folds into the GRAM domain.

Belongs to the GEM family.

This Arabidopsis thaliana (Mouse-ear cress) protein is GEM-like protein 5.